We begin with the raw amino-acid sequence, 60 residues long: MSGGGVFTDILAAAGRIFEVMVEGHWETVGMLFDSLGKGTMRINRNAYGSMGGGTSLRGS.

The residue at position 1 (M1) is an N-formylmethionine. Residue H25 participates in a bacteriochlorophyll c binding.

It belongs to the BChl C/E-binding protein family.

It is found in the chlorosome. Its subcellular location is the chlorosome envelope. Functionally, component of the photosynthetic apparatus. The light harvesting B740 complex binds bacteriochlorophyll c. The polypeptide is Bacteriochlorophyll c-binding protein (csmA) (Pelodictyon luteolum).